Consider the following 1396-residue polypeptide: DNA ligase 6 (1396 aa).

Disordered regions lie at residues 441-464 (KNAC…DTTP) and 562-599 (MNLT…GPGQ). Short sequence motifs (nuclear localization signal) lie at residues 572 to 579 (GKRGKSSG) and 886 to 893 (LRKISVQT). Residue Glu1037 coordinates ATP. Lys1039 (N6-AMP-lysine intermediate) is an active-site residue. Residues Arg1044, Arg1060, Glu1092, and Phe1136 each coordinate ATP. Glu1092 contributes to the Mg(2+) binding site. Position 1207 (Glu1207) interacts with Mg(2+). Positions 1212, 1225, and 1231 each coordinate ATP.

It belongs to the ATP-dependent DNA ligase family. Mg(2+) serves as cofactor. Mostly expressed in buds and flowers, and, to a lower extent, in stems, leaves, siliques and seeds.

The protein localises to the nucleus. The enzyme catalyses ATP + (deoxyribonucleotide)n-3'-hydroxyl + 5'-phospho-(deoxyribonucleotide)m = (deoxyribonucleotide)n+m + AMP + diphosphate.. In terms of biological role, DNA ligase that seals nicks in double-stranded DNA during DNA replication, DNA recombination and DNA repair. Required to maintain seed viability (e.g. longevity and storability) and during seed germination, probably by repairing DNA damage accumulated during seed development, storage and/or imbibition. Facilitates seed germination in cold conditions (2 degrees Celsius) and under oxidative stress (e.g. menadione, a genotoxic agent). Involved in repair of X-ray-induced damage. Functionally, limits stable root transformation by A.tumefaciens T-DNA. This is DNA ligase 6 from Arabidopsis thaliana (Mouse-ear cress).